The primary structure comprises 285 residues: MASLGHPATFGRATHVVVRALPESLAQQALRRTKGDEVDFARAERQHQLYVGVLGSKLGLQVVQLPADESLPDCVFVEDVAVVCEETALITRPGAPSRRKEADMMKEALEKLQLNIVEMKDENATLDGGDVLFTGREFFVGLSKRTNQRGAEILADTFKDYAVSTVPVVDALHLKSFCSMAGPNLIAIGSSESAQKALKIMQQMSDHRYDKLTVPDDTAANCIYLNIPSKGHVLLHRTPEEYPESAKVYEKLKDHMLIPVSNSELEKVDGLLTCSSVLINKKVDS.

A2 carries the post-translational modification N-acetylalanine. 6 residues coordinate substrate: L30, D73, E78, D79, R98, and R145. The Proton donor role is filled by H173. C222 is modified (S-nitrosocysteine). V268 lines the substrate pocket. C274 carries the post-translational modification S-nitrosocysteine. The Nucleophile role is filled by C274. Residue C274 participates in Zn(2+) binding.

In terms of assembly, monomer. In terms of tissue distribution, widely distributed, highest concentrations found in brain, brain cortex and kidney (at protein level).

It catalyses the reaction N(omega),N(omega)-dimethyl-L-arginine + H2O = dimethylamine + L-citrulline. The enzyme catalyses N(omega)-methyl-L-arginine + H2O = L-citrulline + methylamine. Its activity is regulated as follows. Copurifies with a tightly bound zinc ion. Activated by release of zinc. His and other agents that promote the release of bound zinc ions activate the enzyme (in vitro). Inhibited by S-nitrosylation. Zinc protects the protein against S-nitrosylation. In terms of biological role, hydrolyzes N(G),N(G)-dimethyl-L-arginine (ADMA) and N(G)-monomethyl-L-arginine (MMA) which act as inhibitors of NOS. Has therefore a role in the regulation of nitric oxide generation. This chain is N(G),N(G)-dimethylarginine dimethylaminohydrolase 1 (DDAH1), found in Bos taurus (Bovine).